Consider the following 222-residue polypeptide: Leucyl/phenylalanyl-tRNA--protein transferase (222 aa).

This sequence belongs to the L/F-transferase family.

It is found in the cytoplasm. The catalysed reaction is N-terminal L-lysyl-[protein] + L-leucyl-tRNA(Leu) = N-terminal L-leucyl-L-lysyl-[protein] + tRNA(Leu) + H(+). It carries out the reaction N-terminal L-arginyl-[protein] + L-leucyl-tRNA(Leu) = N-terminal L-leucyl-L-arginyl-[protein] + tRNA(Leu) + H(+). The enzyme catalyses L-phenylalanyl-tRNA(Phe) + an N-terminal L-alpha-aminoacyl-[protein] = an N-terminal L-phenylalanyl-L-alpha-aminoacyl-[protein] + tRNA(Phe). In terms of biological role, functions in the N-end rule pathway of protein degradation where it conjugates Leu, Phe and, less efficiently, Met from aminoacyl-tRNAs to the N-termini of proteins containing an N-terminal arginine or lysine. The protein is Leucyl/phenylalanyl-tRNA--protein transferase of Legionella pneumophila (strain Lens).